An 862-amino-acid polypeptide reads, in one-letter code: DNA mismatch repair protein MutS (862 aa).

613–620 (GPNMAGKS) contributes to the ATP binding site.

It belongs to the DNA mismatch repair MutS family.

This protein is involved in the repair of mismatches in DNA. It is possible that it carries out the mismatch recognition step. This protein has a weak ATPase activity. The polypeptide is DNA mismatch repair protein MutS (Desulfitobacterium hafniense (strain Y51)).